A 561-amino-acid polypeptide reads, in one-letter code: Arginine--tRNA ligase (561 aa).

The short motif at 128–138 (ANPTGPLHVGH) is the 'HIGH' region element.

Belongs to the class-I aminoacyl-tRNA synthetase family. Monomer.

Its subcellular location is the cytoplasm. It carries out the reaction tRNA(Arg) + L-arginine + ATP = L-arginyl-tRNA(Arg) + AMP + diphosphate. This chain is Arginine--tRNA ligase, found in Chromohalobacter salexigens (strain ATCC BAA-138 / DSM 3043 / CIP 106854 / NCIMB 13768 / 1H11).